Here is a 572-residue protein sequence, read N- to C-terminus: Chromatin assembly factor 1 subunit B (572 aa).

WD repeat units lie at residues 11–54 (HNKE…DGKA), 64–103 (RHTK…EPEQ), 127–166 (GHLE…KISI), 169–208 (EHKS…VAFN), 228–279 (FHDD…RPIA), 301–347 (RPVA…PFGY), and 351–392 (IHYH…IPLK). Threonine 401 is subject to Phosphothreonine. The segment at 403 to 572 (DTAKKAKNQT…LAPDDSSKTV (170 aa)) is disordered. Polar residues predominate over residues 411-430 (QTHQGSSPGSRSVEGTPSNR). Serine 416 carries the post-translational modification Phosphoserine. A Phosphothreonine modification is found at threonine 426. The span at 431–452 (TQDPSSPCTTPSPTTQSPAPSA) shows a compositional bias: low complexity. Serine 436 is subject to Phosphoserine. A Phosphothreonine modification is found at threonine 440. Serine 456 and serine 465 each carry phosphoserine. Lysine 501 carries the N6-acetyllysine modification. Threonine 502 and threonine 510 each carry phosphothreonine. Over residues 511-529 (PLKTDTVPNPQPNSGTAPS) the composition is skewed to polar residues. Residues 546–559 (PELKRPRLEEREGD) show a composition bias toward basic and acidic residues.

The protein belongs to the WD repeat HIR1 family. In terms of assembly, subunit of the CAF-1 complex that contains RBBP4, CHAF1B and CHAF1A. CHAF1A binds directly to CHAF1B. Interacts with histones H3.1, H3.2 and H3.1t.

Its subcellular location is the nucleus. It is found in the cytoplasm. Acts as a component of the histone chaperone complex chromatin assembly factor 1 (CAF-1), which assembles histone octamers onto DNA during replication and repair. CAF-1 performs the first step of the nucleosome assembly process, bringing newly synthesized histones H3 and H4 to replicating DNA; histones H2A/H2B can bind to this chromatin precursor subsequent to DNA replication to complete the histone octamer. In Mus musculus (Mouse), this protein is Chromatin assembly factor 1 subunit B.